We begin with the raw amino-acid sequence, 218 residues long: MSLGILGKKLGMSQLFDDQGRAVPVTLIEAGPCRITQLKSADTDGYAAVQIGFQLIREKLINKPSKGHLAKSGNDLLRHLREYRVENSSEFELGASITVDDFEKGQKVDVSGDTMGRGFAGYQKRHGFSRGPMSHGSKNHRLPGSIGAGTTPGRVYPGKRMAGRMGGKKVTTRALEILKIDTNHNLLVVKGSVPGKPGSLLNIRPAKRVGVSIQQGGE.

Residues 127 to 167 (GFSRGPMSHGSKNHRLPGSIGAGTTPGRVYPGKRMAGRMGG) form a disordered region.

This sequence belongs to the universal ribosomal protein uL3 family. Part of the 50S ribosomal subunit. Forms a cluster with proteins L14 and L19.

In terms of biological role, one of the primary rRNA binding proteins, it binds directly near the 3'-end of the 23S rRNA, where it nucleates assembly of the 50S subunit. This Prochlorococcus marinus (strain NATL1A) protein is Large ribosomal subunit protein uL3.